The primary structure comprises 432 residues: Fibrinogen gamma chain (432 aa).

The first 24 residues, 1 to 24 (MGRIGTPVFLAFLSALTCSLQVHA), serve as a signal peptide directing secretion. The 244-residue stretch at 169 to 412 (KISPITGKDC…MTTMKLLPMG (244 aa)) folds into the Fibrinogen C-terminal domain. Residues C178 and C207 are joined by a disulfide bond. An N-linked (GlcNAc...) asparagine glycan is attached at N227. Positions 340, 342, 344, and 346 each coordinate Ca(2+). The cysteines at positions 348 and 361 are disulfide-linked. The interval 413–432 (RDLSGHGGQQQSKGNSRGDN) is disordered. The span at 421-432 (QQQSKGNSRGDN) shows a compositional bias: polar residues.

Heterohexamer; disulfide linked. Contains 2 sets of 3 non-identical chains (alpha, beta and gamma). The 2 heterotrimers are in head to head conformation with the N-termini in a small central domain. Post-translationally, conversion of fibrinogen to fibrin is triggered by thrombin, which cleaves fibrinopeptides A and B from alpha and beta chains, and thus exposes the N-terminal polymerization sites responsible for the formation of the soft clot. The soft clot is converted into the hard clot by factor XIIIA which catalyzes the epsilon-(gamma-glutamyl)lysine cross-linking between gamma chains (stronger) and between alpha chains (weaker) of different monomers.

It is found in the secreted. In terms of biological role, together with fibrinogen alpha (FGA) and fibrinogen beta (FGB), polymerizes to form an insoluble fibrin matrix. Has a major function in hemostasis as one of the primary components of blood clots. The polypeptide is Fibrinogen gamma chain (FGG) (Petromyzon marinus (Sea lamprey)).